We begin with the raw amino-acid sequence, 419 residues long: S-adenosylmethionine synthase (419 aa).

H14 serves as a coordination point for ATP. D16 is a binding site for Mg(2+). E42 is a binding site for K(+). The L-methionine site is built by E55 and Q98. The tract at residues 98–108 is flexible loop; it reads QSADINQGVDR. ATP contacts are provided by residues 164 to 166, 242 to 243, D251, 257 to 258, A274, and K278; these read DAK, KF, and RK. D251 lines the L-methionine pocket. Position 282 (K282) interacts with L-methionine.

This sequence belongs to the AdoMet synthase family. In terms of assembly, homotetramer; dimer of dimers. The cofactor is Mg(2+). It depends on K(+) as a cofactor.

The protein resides in the cytoplasm. It catalyses the reaction L-methionine + ATP + H2O = S-adenosyl-L-methionine + phosphate + diphosphate. The protein operates within amino-acid biosynthesis; S-adenosyl-L-methionine biosynthesis; S-adenosyl-L-methionine from L-methionine: step 1/1. In terms of biological role, catalyzes the formation of S-adenosylmethionine (AdoMet) from methionine and ATP. The overall synthetic reaction is composed of two sequential steps, AdoMet formation and the subsequent tripolyphosphate hydrolysis which occurs prior to release of AdoMet from the enzyme. In Cytophaga hutchinsonii (strain ATCC 33406 / DSM 1761 / CIP 103989 / NBRC 15051 / NCIMB 9469 / D465), this protein is S-adenosylmethionine synthase.